The primary structure comprises 176 residues: Dual-action ribosomal maturation protein DarP (176 aa).

The segment covering 1–10 has biased composition (polar residues); sequence MTVPNHQQDI. A disordered region spans residues 1–22; that stretch reads MTVPNHQQDISDSDLESRPSKT.

Belongs to the DarP family.

The protein localises to the cytoplasm. Functionally, member of a network of 50S ribosomal subunit biogenesis factors which assembles along the 30S-50S interface, preventing incorrect 23S rRNA structures from forming. Promotes peptidyl transferase center (PTC) maturation. The sequence is that of Dual-action ribosomal maturation protein DarP from Nitrosomonas eutropha (strain DSM 101675 / C91 / Nm57).